The primary structure comprises 191 residues: uncharacterized protein (191 aa).

The 98-residue stretch at 87–184 folds into the Fe2OG dioxygenase domain; it reads EFDSALIFHY…RIAITFRQMG (98 aa).

This is an uncharacterized protein from Acanthamoeba polyphaga mimivirus (APMV).